Here is a 153-residue protein sequence, read N- to C-terminus: Endoribonuclease YbeY (153 aa).

Zn(2+)-binding residues include His-114, His-118, and His-124.

It belongs to the endoribonuclease YbeY family. It depends on Zn(2+) as a cofactor.

It is found in the cytoplasm. Single strand-specific metallo-endoribonuclease involved in late-stage 70S ribosome quality control and in maturation of the 3' terminus of the 16S rRNA. The chain is Endoribonuclease YbeY from Shewanella sp. (strain MR-7).